A 606-amino-acid chain; its full sequence is Putative auxin response factor 21 (606 aa).

The segment at residues F126–R228 is a DNA-binding region (TF-B3). In terms of domain architecture, PB1 spans R511–K592.

Belongs to the ARF family. Homodimers and heterodimers.

Its subcellular location is the nucleus. In terms of biological role, auxin response factors (ARFs) are transcriptional factors that bind specifically to the DNA sequence 5'-TGTCTC-3' found in the auxin-responsive promoter elements (AuxREs). Could act as transcriptional activator or repressor. Formation of heterodimers with Aux/IAA proteins may alter their ability to modulate early auxin response genes expression. This Arabidopsis thaliana (Mouse-ear cress) protein is Putative auxin response factor 21 (ARF21).